The following is a 346-amino-acid chain: MAEITAKLVKELREKSGAGVMDAKKALVETDGDIEKAIELLREKGMAKAAKKADRVAAEGLTGVYVNGNVAAVIEVNAETDFVAKNAQFVELVNTTAKVIAEGKPANNEESLALIMPSGETLEAAYVSATATIGEKISFRRFALIEKTDAQHFGAYQHNGGRIGVISVVEGGDEALAKQLSMHIAAMKPTVLSYKELDEQFVKDELAQLNHVIDQDNESRAMVNKPALPHLKYGSKAQLTDDVIAQAEADIKAELAAEGKPEKIWDKIIPGKMDRFMLDNTKVDQAYTLLAQVYIMDDSKTVEAYLESVNASVVEFARFEVGEGIEKAANDFEAEVAATMAAALNN.

The interval 80-83 (TDFV) is involved in Mg(2+) ion dislocation from EF-Tu.

Belongs to the EF-Ts family.

It localises to the cytoplasm. Its function is as follows. Associates with the EF-Tu.GDP complex and induces the exchange of GDP to GTP. It remains bound to the aminoacyl-tRNA.EF-Tu.GTP complex up to the GTP hydrolysis stage on the ribosome. The chain is Elongation factor Ts from Streptococcus pneumoniae serotype 19F (strain G54).